The chain runs to 199 residues: uncharacterized protein (199 aa).

Residues 1–41 are disordered; it reads MKFKRDENQNSTHHRGNKNNTNNDDDDKEEEEEIINDTTMP. Residues 23–35 show a composition bias toward acidic residues; the sequence is NDDDDKEEEEEII. The next 3 helical transmembrane spans lie at 73–93, 96–116, and 166–186; these read LILDLVGFFTQIIPIFGFAFW, ISTYLIFKVYGSGLHLCVSFL, and IAIAVALIAIYKIISYFSPYL.

It localises to the membrane. This is an uncharacterized protein from Dictyostelium discoideum (Social amoeba).